The primary structure comprises 337 residues: Mitochondrial glutathione transporter SLC25A40 (337 aa).

Solcar repeat units follow at residues 14 to 132, 140 to 224, and 234 to 328; these read VTPL…LSAF, NETR…LKRW, and PTFM…GKSF. 6 consecutive transmembrane segments (helical) span residues 20–40, 104–124, 146–166, 200–221, 240–260, and 299–319; these read MIAS…LDVV, LWSG…IYFT, IVAG…LELI, WAPT…YENL, FTSG…FDVV, and GLFT…AIMI.

Belongs to the mitochondrial carrier (TC 2.A.29) family.

It localises to the mitochondrion inner membrane. The catalysed reaction is glutathione(in) = glutathione(out). In terms of biological role, probable mitochondrial transporter required for glutathione import into mitochondria. Glutathione, which plays key roles in oxidative metabolism, is produced exclusively in the cytosol and is imported in many organelles. Mitochondrial glutathione is required for the activity and stability of proteins containing iron-sulfur clusters, as well as erythropoiesis. In Mus musculus (Mouse), this protein is Mitochondrial glutathione transporter SLC25A40.